Here is a 295-residue protein sequence, read N- to C-terminus: Glycine N-acyltransferase-like protein Keg1 (295 aa).

At K41 the chain carries N6-acetyllysine; alternate. An N6-succinyllysine; alternate modification is found at K41. K43 carries the post-translational modification N6-acetyllysine. The residue at position 48 (K48) is an N6-acetyllysine; alternate. K48 carries the N6-succinyllysine; alternate modification. Residues K80 and K83 each carry the N6-acetyllysine modification. K124, K128, and K140 each carry N6-acetyllysine; alternate. 3 positions are modified to N6-succinyllysine; alternate: K124, K128, and K140. The residue at position 150 (K150) is an N6-acetyllysine. N6-acetyllysine; alternate is present on K255. At K255 the chain carries N6-succinyllysine; alternate.

Belongs to the glycine N-acyltransferase family. In terms of assembly, binds to microtubules. As to expression, specifically expressed in kidney and liver. Up-regulated in the regenerating liver as well as in hepatocellular carcinoma.

It is found in the cytoplasm. Its subcellular location is the cytoskeleton. The protein localises to the microtubule organizing center. The protein resides in the centrosome. It catalyses the reaction an acyl-CoA + glycine = an N-acylglycine + CoA + H(+). In terms of biological role, acyltransferase which transfers the acyl group to the N-terminus of glycine. Can conjugate a multitude of substrates to form a variety of N-acylglycines. This Rattus norvegicus (Rat) protein is Glycine N-acyltransferase-like protein Keg1 (Keg1).